A 356-amino-acid chain; its full sequence is Heat-inducible transcription repressor HrcA (356 aa).

It belongs to the HrcA family.

Functionally, negative regulator of class I heat shock genes (grpE-dnaK-dnaJ and groELS operons). Prevents heat-shock induction of these operons. In Bartonella quintana (strain Toulouse) (Rochalimaea quintana), this protein is Heat-inducible transcription repressor HrcA.